The sequence spans 182 residues: Endoribonuclease YbeY (182 aa).

Residues histidine 120, histidine 124, and histidine 130 each coordinate Zn(2+). Residues 157–182 (RGVSFAPKPTGAGAFPSAADRDDTQN) are disordered.

It belongs to the endoribonuclease YbeY family. Requires Zn(2+) as cofactor.

The protein resides in the cytoplasm. Functionally, single strand-specific metallo-endoribonuclease involved in late-stage 70S ribosome quality control and in maturation of the 3' terminus of the 16S rRNA. This Corynebacterium jeikeium (strain K411) protein is Endoribonuclease YbeY.